The chain runs to 477 residues: Homeobox protein Meis2 (477 aa).

The interval 71 to 191 is required for interaction with PBX1; that stretch reads DALKRDKDAI…KMPIDLVIDE (121 aa). The MEIS N-terminal domain occupies 110-193; it reads GGDVCSSDSF…PIDLVIDERD (84 aa). The segment covering 193–203 has biased composition (basic and acidic residues); sequence DGSSKSDHEEL. Positions 193–283 are disordered; that stretch reads DGSSKSDHEE…KKRQKKRGIF (91 aa). Polar residues-rich tracts occupy residues 204–217 and 239–251; these read SGSS…NPSS and GHAS…SSEQ. The segment at residues 276–338 is a DNA-binding region (homeobox; TALE-type); that stretch reads RQKKRGIFPK…NARRRIVQPM (63 aa). Residues 299 to 333 are interaction with DNA; sequence LTHPYPSEEQKKQLAQDTGLTILQVNNWFINARRR. The interval 340–477 is transcriptional activation domain; it reads DQSNRAGFLL…GGQVMDIHAQ (138 aa).

This sequence belongs to the TALE/MEIS homeobox family. As to quaternary structure, monomer and homodimer. Heterodimer with HOXB13. Isoform Meis2A interacts with TLX1. Isoform Meis2B interacts with HOXA13 and PBX1 isoform PBX1b. Isoform Meis2D interacts with SP1, SP3 and KLF4. Isoform Meis2D interacts with PBX1 isoform PBX1a; the interaction partially relieves MEIS2 autoinhibition. Isoform Meis2B is part of a PDX1:PBX1b:MEIS2b complex; Meis2B is recruited by PBX1b and can be replaced by isoform Meis2D in a small fraction of complexes. Can form trimeric complexes including HOXB8 and PBX2 or PBX3. In terms of tissue distribution, displays spatially restricted expression patterns in the developing nervous system, limbs, face, and in various viscera. In adult, it is mainly expressed in the brain and female genital tract, with a different distribution of the alternative splice forms in these organs. Lower expression in lung and only basal level in heart, liver, kidney, spleen, and testis. Expressed in pancreatic islets (beta-cells only).

It is found in the nucleus. It localises to the cytoplasm. The protein resides in the perinuclear region. In terms of biological role, involved in transcriptional regulation. Binds to HOX or PBX proteins to form dimers, or to a DNA-bound dimer of PBX and HOX proteins and thought to have a role in stabilization of the homeoprotein-DNA complex. Isoform Meis2B is required for the activity of a PDX1:PBX1b:MEIS2b complex in pancreatic acinar cells involved in the transcriptional activation of the ELA1 enhancer; the complex binds to the enhancer B element and cooperates with the transcription factor 1 complex (PTF1) bound to the enhancer A element; MEIS2 is not involved in complex DNA-binding. Probably in complex with PBX1, is involved in transcriptional regulation by KLF4. Isoforms Meis2B and Meis2D can bind to a EPHA8 promoter sequence containing the DNA motif 5'-CGGTCA-3'; in cooperation with a PBX protein (such as PBX2) is proposed to be involved in the transcriptional activation of EPHA8 in the developing midbrain. May be involved in regulation of myeloid differentiation. Can bind to the DNA sequence 5'-TGACAG-3'in the activator ACT sequence of the D(1A) dopamine receptor (DRD1) promoter and activate DRD1 transcription. This chain is Homeobox protein Meis2 (Meis2), found in Mus musculus (Mouse).